The sequence spans 603 residues: Proline--tRNA ligase (603 aa).

Belongs to the class-II aminoacyl-tRNA synthetase family. ProS type 1 subfamily. As to quaternary structure, homodimer.

The protein resides in the cytoplasm. The catalysed reaction is tRNA(Pro) + L-proline + ATP = L-prolyl-tRNA(Pro) + AMP + diphosphate. Its function is as follows. Catalyzes the attachment of proline to tRNA(Pro) in a two-step reaction: proline is first activated by ATP to form Pro-AMP and then transferred to the acceptor end of tRNA(Pro). As ProRS can inadvertently accommodate and process non-cognate amino acids such as alanine and cysteine, to avoid such errors it has two additional distinct editing activities against alanine. One activity is designated as 'pretransfer' editing and involves the tRNA(Pro)-independent hydrolysis of activated Ala-AMP. The other activity is designated 'posttransfer' editing and involves deacylation of mischarged Ala-tRNA(Pro). The misacylated Cys-tRNA(Pro) is not edited by ProRS. The chain is Proline--tRNA ligase from Prochlorococcus marinus (strain SARG / CCMP1375 / SS120).